Reading from the N-terminus, the 524-residue chain is 11-oxo-beta-amyrin 30-oxidase (524 aa).

The chain crosses the membrane as a helical span at residues 9 to 29 (GTTVIISVLSVLLAVIPWYLL). Residue Cys-472 coordinates heme.

The protein belongs to the cytochrome P450 family. It depends on heme as a cofactor. In terms of tissue distribution, expressed in flowers. Detected in roots upon salt treatment.

The protein localises to the membrane. It carries out the reaction 11-oxo-beta-amyrin + 3 reduced [NADPH--hemoprotein reductase] + 3 O2 = glycyrrhetinate + 3 oxidized [NADPH--hemoprotein reductase] + 4 H2O + 4 H(+). In terms of biological role, involved in the biosynthesis of triterpenoid saponins. Catalyzes three sequential oxidation steps at C-30 of 11-oxo-beta-amyrin. Also able to catalyze sequential C-30 hydroxylation of beta-amyrin to produce 30-hydroxy-beta-amyrin and 11-deoxoglycyrrhetinic acid. This is 11-oxo-beta-amyrin 30-oxidase (CYP72A63) from Medicago truncatula (Barrel medic).